Consider the following 48-residue polypeptide: ATP synthase protein 8 (48 aa).

The chain crosses the membrane as a helical span at residues 12 to 32 (LLTFGMLAISMLLYLVSTIIL).

The protein belongs to the ATPase protein 8 family. F-type ATPases have 2 components, CF(1) - the catalytic core - and CF(0) - the membrane proton channel.

Its subcellular location is the mitochondrion membrane. In terms of biological role, mitochondrial membrane ATP synthase (F(1)F(0) ATP synthase or Complex V) produces ATP from ADP in the presence of a proton gradient across the membrane which is generated by electron transport complexes of the respiratory chain. F-type ATPases consist of two structural domains, F(1) - containing the extramembraneous catalytic core and F(0) - containing the membrane proton channel, linked together by a central stalk and a peripheral stalk. During catalysis, ATP synthesis in the catalytic domain of F(1) is coupled via a rotary mechanism of the central stalk subunits to proton translocation. Part of the complex F(0) domain. Minor subunit located with subunit a in the membrane. This is ATP synthase protein 8 (ATP8) from Debaryomyces hansenii (strain ATCC 36239 / CBS 767 / BCRC 21394 / JCM 1990 / NBRC 0083 / IGC 2968) (Yeast).